A 172-amino-acid chain; its full sequence is Protein-export protein SecB (172 aa).

It belongs to the SecB family. Homotetramer, a dimer of dimers. One homotetramer interacts with 1 SecA dimer.

It localises to the cytoplasm. In terms of biological role, one of the proteins required for the normal export of preproteins out of the cell cytoplasm. It is a molecular chaperone that binds to a subset of precursor proteins, maintaining them in a translocation-competent state. It also specifically binds to its receptor SecA. This Cupriavidus pinatubonensis (strain JMP 134 / LMG 1197) (Cupriavidus necator (strain JMP 134)) protein is Protein-export protein SecB.